We begin with the raw amino-acid sequence, 552 residues long: Scaffold protein (552 aa).

It belongs to the poxviridae protein D13 family. As to quaternary structure, homotrimer. Self-assembles to form a layer. Interacts with A17 (via N-terminus); this interaction is necessary for D13 association with membranes.

The protein resides in the membrane. In terms of biological role, scaffold protein which forms a transitory spherical honeycomb lattice providing curvature and rigidity to the convex membrane of crescent and immature virions (IV). This association occurs concomitantly with viral membrane formation. Targeted by the drug rifampicin, which prevents the formation of this lattice, and hence virus morphogenesis. In the presence of rifampicin, irregularly shaped membranes that lack the honeycomb layer accumulate around areas of electron-dense viroplasm. This layer is lost from virions during maturation from IV to mature virion (MV), through the proteolysis of A17 N-terminus. This chain is Scaffold protein, found in Vertebrata (FPV).